The sequence spans 154 residues: SsrA-binding protein (154 aa).

This sequence belongs to the SmpB family.

The protein resides in the cytoplasm. Its function is as follows. Required for rescue of stalled ribosomes mediated by trans-translation. Binds to transfer-messenger RNA (tmRNA), required for stable association of tmRNA with ribosomes. tmRNA and SmpB together mimic tRNA shape, replacing the anticodon stem-loop with SmpB. tmRNA is encoded by the ssrA gene; the 2 termini fold to resemble tRNA(Ala) and it encodes a 'tag peptide', a short internal open reading frame. During trans-translation Ala-aminoacylated tmRNA acts like a tRNA, entering the A-site of stalled ribosomes, displacing the stalled mRNA. The ribosome then switches to translate the ORF on the tmRNA; the nascent peptide is terminated with the 'tag peptide' encoded by the tmRNA and targeted for degradation. The ribosome is freed to recommence translation, which seems to be the essential function of trans-translation. The protein is SsrA-binding protein of Synechococcus sp. (strain JA-3-3Ab) (Cyanobacteria bacterium Yellowstone A-Prime).